The chain runs to 248 residues: DNA polymerase sliding clamp 2 (248 aa).

This sequence belongs to the PCNA family. As to quaternary structure, homotrimer. The subunits circularize to form a toroid; DNA passes through its center. Replication factor C (RFC) is required to load the toroid on the DNA.

Its function is as follows. Sliding clamp subunit that acts as a moving platform for DNA processing. Responsible for tethering the catalytic subunit of DNA polymerase and other proteins to DNA during high-speed replication. In Sulfurisphaera ohwakuensis, this protein is DNA polymerase sliding clamp 2.